The sequence spans 510 residues: Arginine biosynthesis bifunctional protein ArgJ, chloroplastic (510 aa).

Substrate is bound by residues Thr-223, Lys-249, Glu-359, Asn-505, and Thr-510.

This sequence belongs to the ArgJ family. Heterodimer of an alpha and a beta chain.

Its subcellular location is the plastid. It localises to the chloroplast. It catalyses the reaction N(2)-acetyl-L-ornithine + L-glutamate = N-acetyl-L-glutamate + L-ornithine. The enzyme catalyses L-glutamate + acetyl-CoA = N-acetyl-L-glutamate + CoA + H(+). Its pathway is amino-acid biosynthesis; L-arginine biosynthesis; L-ornithine and N-acetyl-L-glutamate from L-glutamate and N(2)-acetyl-L-ornithine (cyclic): step 1/1. It functions in the pathway amino-acid biosynthesis; L-arginine biosynthesis; N(2)-acetyl-L-ornithine from L-glutamate: step 1/4. In terms of biological role, catalyzes two activities which are involved in the cyclic version of arginine biosynthesis: the synthesis of acetylglutamate from glutamate and acetyl-CoA, and of ornithine by transacetylation between acetylornithine and glutamate. The sequence is that of Arginine biosynthesis bifunctional protein ArgJ, chloroplastic from Vitis vinifera (Grape).